A 348-amino-acid chain; its full sequence is Succinylglutamate desuccinylase (348 aa).

Zn(2+) is bound by residues histidine 64, glutamate 67, and histidine 164. The active site involves glutamate 228.

Belongs to the AspA/AstE family. Succinylglutamate desuccinylase subfamily. The cofactor is Zn(2+).

It catalyses the reaction N-succinyl-L-glutamate + H2O = L-glutamate + succinate. The protein operates within amino-acid degradation; L-arginine degradation via AST pathway; L-glutamate and succinate from L-arginine: step 5/5. In terms of biological role, transforms N(2)-succinylglutamate into succinate and glutamate. This Shewanella amazonensis (strain ATCC BAA-1098 / SB2B) protein is Succinylglutamate desuccinylase.